Reading from the N-terminus, the 447-residue chain is Tyrosine aminotransferase (447 aa).

The residue at position 273 (K273) is an N6-(pyridoxal phosphate)lysine. S441 is subject to Phosphoserine.

This sequence belongs to the class-I pyridoxal-phosphate-dependent aminotransferase family. Homodimer. Pyridoxal 5'-phosphate is required as a cofactor.

The enzyme catalyses L-tyrosine + 2-oxoglutarate = 3-(4-hydroxyphenyl)pyruvate + L-glutamate. It functions in the pathway amino-acid degradation; L-phenylalanine degradation; acetoacetate and fumarate from L-phenylalanine: step 2/6. In terms of biological role, transaminase involved in tyrosine breakdown. Converts tyrosine to p-hydroxyphenylpyruvate. Can catalyze the reverse reaction, using glutamic acid, with 2-oxoglutarate as cosubstrate (in vitro). Has much lower affinity and transaminase activity for phenylalanine. The sequence is that of Tyrosine aminotransferase (TAT) from Bos taurus (Bovine).